A 338-amino-acid polypeptide reads, in one-letter code: 2,3-dihydroxybenzoate decarboxylase (338 aa).

Cys251 is a catalytic residue.

Belongs to the metallo-dependent hydrolases superfamily. Homotetramer.

The enzyme catalyses 2,3-dihydroxybenzoate + H(+) = catechol + CO2. It functions in the pathway aromatic compound metabolism; benzoate degradation via hydroxylation. Its function is as follows. Has an absolute substrate specificity for 2,3-DHBA. The sequence is that of 2,3-dihydroxybenzoate decarboxylase from Aspergillus oryzae (strain ATCC 42149 / RIB 40) (Yellow koji mold).